The following is a 41-amino-acid chain: uncharacterized protein (41 aa).

The helical transmembrane segment at Leu10–Leu32 threads the bilayer.

The protein localises to the cell inner membrane. This is an uncharacterized protein from Escherichia coli (strain K12).